The following is a 119-amino-acid chain: Large ribosomal subunit protein bL20 (119 aa).

It belongs to the bacterial ribosomal protein bL20 family.

Binds directly to 23S ribosomal RNA and is necessary for the in vitro assembly process of the 50S ribosomal subunit. It is not involved in the protein synthesizing functions of that subunit. The chain is Large ribosomal subunit protein bL20 from Rhodopseudomonas palustris (strain BisB18).